The sequence spans 613 residues: Oxidoreductase GME11365 (613 aa).

Plastocyanin-like domains follow at residues 72 to 188 (ISEA…HGPS), 198 to 331 (PLLI…WIHG), and 431 to 571 (VDWR…EQPS).

This sequence belongs to the multicopper oxidase family.

Its pathway is secondary metabolite biosynthesis. Its function is as follows. Oxidoreductase; part of the gene cluster that mediates the biosynthesis of dibenzodioxocinones such as pestalotiollide B, a novel class of inhibitors against cholesterol ester transfer protein (CEPT). The biosynthesis initiates from condensation of acetate and malonate units catalyzed by the non-reducing PKS pks8/GME11356. Pks8/GME11356 lacks a thioesterase (TE) domain, which is important to the cyclizing of the third ring of atrochrysone carboxylic acid, and the esterase GME11355 might play the role of TE and catalyzes the cyclization reaction of the C ring. The lactamase-like protein GME11357 (or other beta-lactamases in Pestalotiopsis microspora) probably hydrolyzes the thioester bond between the ACP of pks8/GME11356 and the intermediate to release atrochrysone carboxylic acid, which is spontaneously dehydrates to form endocrocin anthrone. Endocrocin anthrone is further converted to emodin via the endocrocin intermediate. Emodin is then oxidized by several enzymes such as the Baeyer-Villiger oxidase GME11358, the oxidoreductase GME11367, the short chain dehydrogenase/reductase GME11373, as well as by other oxidoreductases from the cluster, to modify the A and C rings and open the B ring, and finally yield monodictyphenone. The prenyltransferase GME11375 may catalyze the addition reaction between the C5 side chains and the carbon bone of dibenzodioxocinones. The remaining biochemical reactions to the final product dibenzodioxocinones should be methylation catalyzed by methyltransferase GME11366 and reduction and lactonization reaction catalyzed by a series of oxidordeuctases. In Pestalotiopsis microspora, this protein is Oxidoreductase GME11365.